A 658-amino-acid chain; its full sequence is Probable CoA ligase CCL6 (658 aa).

ATP-binding positions include 226–234 (TSGATGEPK), 411–416 (QGYGLT), D497, 509–512 (IIDR), and K632. The segment at 298-411 (DIRFLMDDLQ…RVTSCAALSQ (114 aa)) is SBD1. Residues 412–477 (GYGLTESCGG…LRGTTLFSGY (66 aa)) form an SBD2 region.

It belongs to the ATP-dependent AMP-binding enzyme family. In terms of tissue distribution, mostly expressed in glandular trichomes (lupulin glands) after flowering, and, to a lower extent, in stems, leaves, cones and flowers.

Its subcellular location is the cytoplasm. The protein resides in the cytosol. The sequence is that of Probable CoA ligase CCL6 from Humulus lupulus (European hop).